The chain runs to 471 residues: Bifunctional protein GlmU (471 aa).

A pyrophosphorylase region spans residues 1–232; it reads MSDITAVLLA…EEDALAPNDR (232 aa). Residues 9 to 12, Lys-23, Gln-73, 78 to 79, 102 to 104, Gly-141, Glu-157, and Asn-230 contribute to the UDP-N-acetyl-alpha-D-glucosamine site; these read LAAG, GT, and YGD. Asp-104 contributes to the Mg(2+) binding site. Mg(2+) is bound at residue Asn-230. Residues 233–253 form a linker region; the sequence is VELARAEARLRRQINERHMRN. The interval 254–471 is N-acetyltransferase; sequence GVTIINPDAT…RQRKMNREGT (218 aa). UDP-N-acetyl-alpha-D-glucosamine contacts are provided by Arg-335 and Lys-353. The active-site Proton acceptor is the His-365. Tyr-368 and Asn-379 together coordinate UDP-N-acetyl-alpha-D-glucosamine. Residues Ala-382, 388 to 389, Ala-425, and Arg-444 contribute to the acetyl-CoA site; that span reads NY.

In the N-terminal section; belongs to the N-acetylglucosamine-1-phosphate uridyltransferase family. This sequence in the C-terminal section; belongs to the transferase hexapeptide repeat family. Homotrimer. Mg(2+) is required as a cofactor.

Its subcellular location is the cytoplasm. The catalysed reaction is alpha-D-glucosamine 1-phosphate + acetyl-CoA = N-acetyl-alpha-D-glucosamine 1-phosphate + CoA + H(+). The enzyme catalyses N-acetyl-alpha-D-glucosamine 1-phosphate + UTP + H(+) = UDP-N-acetyl-alpha-D-glucosamine + diphosphate. Its pathway is nucleotide-sugar biosynthesis; UDP-N-acetyl-alpha-D-glucosamine biosynthesis; N-acetyl-alpha-D-glucosamine 1-phosphate from alpha-D-glucosamine 6-phosphate (route II): step 2/2. It participates in nucleotide-sugar biosynthesis; UDP-N-acetyl-alpha-D-glucosamine biosynthesis; UDP-N-acetyl-alpha-D-glucosamine from N-acetyl-alpha-D-glucosamine 1-phosphate: step 1/1. The protein operates within bacterial outer membrane biogenesis; LPS lipid A biosynthesis. Functionally, catalyzes the last two sequential reactions in the de novo biosynthetic pathway for UDP-N-acetylglucosamine (UDP-GlcNAc). The C-terminal domain catalyzes the transfer of acetyl group from acetyl coenzyme A to glucosamine-1-phosphate (GlcN-1-P) to produce N-acetylglucosamine-1-phosphate (GlcNAc-1-P), which is converted into UDP-GlcNAc by the transfer of uridine 5-monophosphate (from uridine 5-triphosphate), a reaction catalyzed by the N-terminal domain. This Symbiobacterium thermophilum (strain DSM 24528 / JCM 14929 / IAM 14863 / T) protein is Bifunctional protein GlmU.